Reading from the N-terminus, the 489-residue chain is Rhamnulokinase (489 aa).

13–17 (ASSGR) contacts ATP. Cys-68 and Cys-222 are oxidised to a cystine. Residues Gly-83 and 236 to 238 (HDT) contribute to the substrate site. Asp-237 (proton acceptor) is an active-site residue. Thr-259 is a binding site for ATP. Substrate is bound at residue Asn-296. Gln-304 is a binding site for ATP. A disulfide bond links Cys-353 and Cys-370. Gly-402 serves as a coordination point for ATP. An intrachain disulfide couples Cys-413 to Cys-417.

This sequence belongs to the rhamnulokinase family. The cofactor is Mg(2+).

It catalyses the reaction L-rhamnulose + ATP = L-rhamnulose 1-phosphate + ADP + H(+). The protein operates within carbohydrate degradation; L-rhamnose degradation; glycerone phosphate from L-rhamnose: step 2/3. In terms of biological role, involved in the catabolism of L-rhamnose (6-deoxy-L-mannose). Catalyzes the transfer of the gamma-phosphate group from ATP to the 1-hydroxyl group of L-rhamnulose to yield L-rhamnulose 1-phosphate. The sequence is that of Rhamnulokinase from Salmonella paratyphi A (strain AKU_12601).